Consider the following 86-residue polypeptide: Probable weak neurotoxin NNAM2 (86 aa).

A signal peptide spans 1 to 21; that stretch reads MKTLLLTLVVVTIVCLDLGYT. 5 cysteine pairs are disulfide-bonded: C24/C45, C27/C32, C38/C63, C67/C78, and C79/C84.

This sequence belongs to the three-finger toxin family. Ancestral subfamily. Orphan group II sub-subfamily. In terms of tissue distribution, expressed by the venom gland.

The protein resides in the secreted. Its function is as follows. Binds with low affinity to muscular (alpha-1-beta-1-delta-epsilon/CHRNA1-CHRNB1-CHRND-CHRNE) and very low affinity to neuronal (alpha-7/CHRNA7) nicotinic acetylcholine receptor (nAChR). The protein is Probable weak neurotoxin NNAM2 of Naja atra (Chinese cobra).